The sequence spans 215 residues: Riboflavin synthase (215 aa).

2 Lumazine-binding repeats span residues 1-96 (MFTG…FGGH) and 97-193 (FVSG…YRFL). Residues 4-6 (GII), 47-49 (CLT), 61-66 (DVMPET), 100-102 (GHV), Lys-135, 144-146 (SLT), and 158-163 (SLIPHT) contribute to the 2,4-dihydroxypteridine site.

As to quaternary structure, homotrimer. Can interact with 6,7-dimethyl-8-ribityllumazine synthase, forming a lumazine synthase/riboflavin synthase complex, also designated as 'heavy riboflavin synthase complex', which consists of a trimer of riboflavin synthase enclosed within an icosahedral structure composed of 60 subunits of 6,7-dimethyl-8-ribityllumazine synthase.

The catalysed reaction is 2 6,7-dimethyl-8-(1-D-ribityl)lumazine + H(+) = 5-amino-6-(D-ribitylamino)uracil + riboflavin. Its pathway is cofactor biosynthesis; riboflavin biosynthesis; riboflavin from 2-hydroxy-3-oxobutyl phosphate and 5-amino-6-(D-ribitylamino)uracil: step 2/2. Its activity is regulated as follows. Is activated by sulfite ions. In terms of biological role, catalyzes the dismutation of two molecules of 6,7-dimethyl-8-ribityllumazine, resulting in the formation of riboflavin and 5-amino-6-(D-ribitylamino)uracil. The polypeptide is Riboflavin synthase (ribE) (Bacillus subtilis (strain 168)).